Consider the following 367-residue polypeptide: Phosphoribosylaminoimidazole-succinocarboxamide synthase (367 aa).

The protein belongs to the SAICAR synthetase family.

It catalyses the reaction 5-amino-1-(5-phospho-D-ribosyl)imidazole-4-carboxylate + L-aspartate + ATP = (2S)-2-[5-amino-1-(5-phospho-beta-D-ribosyl)imidazole-4-carboxamido]succinate + ADP + phosphate + 2 H(+). Its pathway is purine metabolism; IMP biosynthesis via de novo pathway; 5-amino-1-(5-phospho-D-ribosyl)imidazole-4-carboxamide from 5-amino-1-(5-phospho-D-ribosyl)imidazole-4-carboxylate: step 1/2. The sequence is that of Phosphoribosylaminoimidazole-succinocarboxamide synthase from Shewanella oneidensis (strain ATCC 700550 / JCM 31522 / CIP 106686 / LMG 19005 / NCIMB 14063 / MR-1).